A 260-amino-acid polypeptide reads, in one-letter code: MTHQHPYHLVDQSPWPLTGAISALMMTSGLILWFHINSTILFILGTVLLVLTIINWWRDIIREATFQGFHTLSVSNGLRYGMILFITSEVCLFFAFFWAFFHSSLAPTIELGVSWPPTGITPINPFLVPLLNTAVLLSSGVTVTWAHHSILSGNRVEAIQSLTLTVFLGVYFTILQAWEYFDSPFTIADSVYGSTFFVATGFHGLHVLIGTAFLAVCLLRLYNFHFSNHHHFGFEAASWYWHFVDVVWLFLYICIYWWGS.

A run of 6 helical transmembrane segments spans residues 30-50 (LILWFHINSTILFILGTVLLV), 81-101 (GMILFITSEVCLFFAFFWAFF), 126-146 (FLVPLLNTAVLLSSGVTVTWA), 158-178 (AIQSLTLTVFLGVYFTILQAW), 196-216 (FFVATGFHGLHVLIGTAFLAV), and 239-259 (WYWHFVDVVWLFLYICIYWWG).

This sequence belongs to the cytochrome c oxidase subunit 3 family. Component of the cytochrome c oxidase (complex IV, CIV), a multisubunit enzyme composed of a catalytic core of 3 subunits and several supernumerary subunits. The complex exists as a monomer or a dimer and forms supercomplexes (SCs) in the inner mitochondrial membrane with ubiquinol-cytochrome c oxidoreductase (cytochrome b-c1 complex, complex III, CIII).

It is found in the mitochondrion inner membrane. The enzyme catalyses 4 Fe(II)-[cytochrome c] + O2 + 8 H(+)(in) = 4 Fe(III)-[cytochrome c] + 2 H2O + 4 H(+)(out). In terms of biological role, component of the cytochrome c oxidase, the last enzyme in the mitochondrial electron transport chain which drives oxidative phosphorylation. The respiratory chain contains 3 multisubunit complexes succinate dehydrogenase (complex II, CII), ubiquinol-cytochrome c oxidoreductase (cytochrome b-c1 complex, complex III, CIII) and cytochrome c oxidase (complex IV, CIV), that cooperate to transfer electrons derived from NADH and succinate to molecular oxygen, creating an electrochemical gradient over the inner membrane that drives transmembrane transport and the ATP synthase. Cytochrome c oxidase is the component of the respiratory chain that catalyzes the reduction of oxygen to water. Electrons originating from reduced cytochrome c in the intermembrane space (IMS) are transferred via the dinuclear copper A center (CU(A)) of subunit 2 and heme A of subunit 1 to the active site in subunit 1, a binuclear center (BNC) formed by heme A3 and copper B (CU(B)). The BNC reduces molecular oxygen to 2 water molecules using 4 electrons from cytochrome c in the IMS and 4 protons from the mitochondrial matrix. The chain is Cytochrome c oxidase subunit 3 (COIII) from Pisaster ochraceus (Ochre sea star).